The primary structure comprises 342 residues: Phosphoribosylformylglycinamidine cyclo-ligase (342 aa).

Belongs to the AIR synthase family.

Its subcellular location is the cytoplasm. The enzyme catalyses 2-formamido-N(1)-(5-O-phospho-beta-D-ribosyl)acetamidine + ATP = 5-amino-1-(5-phospho-beta-D-ribosyl)imidazole + ADP + phosphate + H(+). Its pathway is purine metabolism; IMP biosynthesis via de novo pathway; 5-amino-1-(5-phospho-D-ribosyl)imidazole from N(2)-formyl-N(1)-(5-phospho-D-ribosyl)glycinamide: step 2/2. This Staphylococcus aureus (strain MRSA252) protein is Phosphoribosylformylglycinamidine cyclo-ligase.